A 225-amino-acid chain; its full sequence is ATP-dependent dethiobiotin synthetase BioD (225 aa).

An ATP-binding site is contributed by 15 to 20; the sequence is EIGKTF. Threonine 19 contacts Mg(2+). Residue lysine 40 is part of the active site. ATP contacts are provided by residues aspartate 57, 118–121, 178–179, and 207–209; these read EGVG, NR, and PHV. Aspartate 57 and glutamate 118 together coordinate Mg(2+).

It belongs to the dethiobiotin synthetase family. As to quaternary structure, homodimer. It depends on Mg(2+) as a cofactor.

It is found in the cytoplasm. The catalysed reaction is (7R,8S)-7,8-diammoniononanoate + CO2 + ATP = (4R,5S)-dethiobiotin + ADP + phosphate + 3 H(+). It functions in the pathway cofactor biosynthesis; biotin biosynthesis; biotin from 7,8-diaminononanoate: step 1/2. Catalyzes a mechanistically unusual reaction, the ATP-dependent insertion of CO2 between the N7 and N8 nitrogen atoms of 7,8-diaminopelargonic acid (DAPA, also called 7,8-diammoniononanoate) to form a ureido ring. The sequence is that of ATP-dependent dethiobiotin synthetase BioD from Aromatoleum aromaticum (strain DSM 19018 / LMG 30748 / EbN1) (Azoarcus sp. (strain EbN1)).